The sequence spans 422 residues: Tyrosine--tRNA ligase 1 (422 aa).

An L-tyrosine-binding site is contributed by Tyr-35. Positions 40 to 49 (PTADSLHIGH) match the 'HIGH' region motif. 2 residues coordinate L-tyrosine: Tyr-170 and Gln-174. Positions 232–236 (KFGKT) match the 'KMSKS' region motif. ATP is bound at residue Lys-235. Residues 355-421 (LSLVDVLVQS…GKKKYFLVTY (67 aa)) enclose the S4 RNA-binding domain.

It belongs to the class-I aminoacyl-tRNA synthetase family. TyrS type 1 subfamily. In terms of assembly, homodimer.

The protein localises to the cytoplasm. It carries out the reaction tRNA(Tyr) + L-tyrosine + ATP = L-tyrosyl-tRNA(Tyr) + AMP + diphosphate + H(+). Its function is as follows. Catalyzes the attachment of tyrosine to tRNA(Tyr) in a two-step reaction: tyrosine is first activated by ATP to form Tyr-AMP and then transferred to the acceptor end of tRNA(Tyr). The protein is Tyrosine--tRNA ligase 1 of Bacillus subtilis (strain 168).